Here is a 308-residue protein sequence, read N- to C-terminus: Ribosomal RNA small subunit methyltransferase H (308 aa).

Residues 32–34 (GGH), D52, F78, D100, and Q107 each bind S-adenosyl-L-methionine.

It belongs to the methyltransferase superfamily. RsmH family.

Its subcellular location is the cytoplasm. It carries out the reaction cytidine(1402) in 16S rRNA + S-adenosyl-L-methionine = N(4)-methylcytidine(1402) in 16S rRNA + S-adenosyl-L-homocysteine + H(+). Functionally, specifically methylates the N4 position of cytidine in position 1402 (C1402) of 16S rRNA. The protein is Ribosomal RNA small subunit methyltransferase H of Legionella pneumophila (strain Corby).